The following is a 125-amino-acid chain: Monothiol glutaredoxin-S2 (125 aa).

Residues 28–124 form the Glutaredoxin domain; it reads AERVGRLVRE…PRLREVGALC (97 aa). [2Fe-2S] cluster is bound at residue cysteine 48.

Belongs to the glutaredoxin family. CC-type subfamily.

Its subcellular location is the cytoplasm. Its function is as follows. May only reduce GSH-thiol disulfides, but not protein disulfides. The polypeptide is Monothiol glutaredoxin-S2 (GRXS2) (Oryza sativa subsp. japonica (Rice)).